Here is a 663-residue protein sequence, read N- to C-terminus: COBRA-like protein 9 (663 aa).

A signal peptide spans 1-23; the sequence is MGVLLPIFFGVLLLFTVTPPSMS. N-linked (GlcNAc...) asparagine glycans are attached at residues N63, N111, N121, N169, N203, N326, N355, N397, N409, N429, N470, N550, and N561. S638 is lipidated: GPI-anchor amidated serine. A propeptide spans 639–663 (removed in mature form); sequence GGRRNGAITVLSFITFYVAAFMVLL.

Belongs to the COBRA family. Expressed only in flowers.

It localises to the cell membrane. The sequence is that of COBRA-like protein 9 (COBL9) from Arabidopsis thaliana (Mouse-ear cress).